A 341-amino-acid polypeptide reads, in one-letter code: UDP-3-O-acylglucosamine N-acyltransferase (341 aa).

His-239 (proton acceptor) is an active-site residue.

Belongs to the transferase hexapeptide repeat family. LpxD subfamily. Homotrimer.

The catalysed reaction is a UDP-3-O-[(3R)-3-hydroxyacyl]-alpha-D-glucosamine + a (3R)-hydroxyacyl-[ACP] = a UDP-2-N,3-O-bis[(3R)-3-hydroxyacyl]-alpha-D-glucosamine + holo-[ACP] + H(+). The protein operates within bacterial outer membrane biogenesis; LPS lipid A biosynthesis. Functionally, catalyzes the N-acylation of UDP-3-O-acylglucosamine using 3-hydroxyacyl-ACP as the acyl donor. Is involved in the biosynthesis of lipid A, a phosphorylated glycolipid that anchors the lipopolysaccharide to the outer membrane of the cell. The polypeptide is UDP-3-O-acylglucosamine N-acyltransferase (Photobacterium profundum (strain SS9)).